Here is a 505-residue protein sequence, read N- to C-terminus: Zinc metalloproteinase/disintegrin (505 aa).

An N-terminal signal peptide occupies residues 1–20; that stretch reads MIQVLLVIICLAAFPYQGTS. A propeptide spanning residues 21-214 is cleaved from the precursor; that stretch reads IILESGNVND…PIKKASQSNL (194 aa). Tandem repeats lie at residues 153–179 and 180–206. A Peptidase M12B domain is found at 220 to 416; sequence RYIELVIVAD…QKPQCILNKP (197 aa). Glu-223 and Asp-307 together coordinate Ca(2+). His-356 serves as a coordination point for Zn(2+). Glu-357 is a catalytic residue. Zn(2+) contacts are provided by His-360 and His-366. Intrachain disulfides connect Cys-371-Cys-395 and Cys-373-Cys-378. Ca(2+) is bound by residues Cys-411 and Asn-414. The propeptide occupies 417 to 432; sequence LRTDTVSTPVSGNELL. Positions 424–505 constitute a Disintegrin domain; the sequence is TPVSGNELLE…AGCPRNPFHA (82 aa). 6 cysteine pairs are disulfide-bonded: Cys-438–Cys-453, Cys-440–Cys-448, Cys-447–Cys-470, Cys-461–Cys-467, Cys-466–Cys-491, and Cys-479–Cys-498. Residues 483-485 carry the Cell attachment site motif; it reads RGD.

This sequence belongs to the venom metalloproteinase (M12B) family. P-II subfamily. P-IIa sub-subfamily. In terms of assembly, monomer. The cofactor is Zn(2+). As to expression, expressed by the venom gland.

It localises to the secreted. Functionally, impairs hemostasis in the envenomed animal. In terms of biological role, inhibits platelet aggregation induced by ADP, thrombin, platelet-activating factor and collagen. Acts by inhibiting fibrinogen interaction with platelet receptors GPIIb/GPIIIa (ITGA2B/ITGB3). This Gloydius brevicauda (Korean slamosa snake) protein is Zinc metalloproteinase/disintegrin.